Reading from the N-terminus, the 125-residue chain is Large ribosomal subunit protein bL12 (125 aa).

Belongs to the bacterial ribosomal protein bL12 family. In terms of assembly, homodimer. Part of the ribosomal stalk of the 50S ribosomal subunit. Forms a multimeric L10(L12)X complex, where L10 forms an elongated spine to which 2 to 4 L12 dimers bind in a sequential fashion. Binds GTP-bound translation factors.

Forms part of the ribosomal stalk which helps the ribosome interact with GTP-bound translation factors. Is thus essential for accurate translation. This is Large ribosomal subunit protein bL12 from Rhizobium leguminosarum bv. trifolii (strain WSM2304).